Consider the following 151-residue polypeptide: UPF0756 membrane protein Hore_21770 (151 aa).

5 helical membrane passes run 7–29, 49–69, 84–104, 110–130, and 131–151; these read LLII…GLLL, IEIG…LSPV, TVAI…LDLL, FILG…GIPV, and GPLM…IIKG.

This sequence belongs to the UPF0756 family.

It localises to the cell membrane. This is UPF0756 membrane protein Hore_21770 from Halothermothrix orenii (strain H 168 / OCM 544 / DSM 9562).